The sequence spans 386 residues: Succinate--CoA ligase [ADP-forming] subunit beta (386 aa).

Residues 9–244 (KEILKQYGVK…LDEEDEKEIE (236 aa)) form the ATP-grasp domain. ATP contacts are provided by residues K46, 53-55 (GRG), E99, C102, and E107. Residues N199 and D213 each coordinate Mg(2+). Substrate-binding positions include N264 and 321-323 (GIM).

Belongs to the succinate/malate CoA ligase beta subunit family. As to quaternary structure, heterotetramer of two alpha and two beta subunits. Requires Mg(2+) as cofactor.

It catalyses the reaction succinate + ATP + CoA = succinyl-CoA + ADP + phosphate. The catalysed reaction is GTP + succinate + CoA = succinyl-CoA + GDP + phosphate. It functions in the pathway carbohydrate metabolism; tricarboxylic acid cycle; succinate from succinyl-CoA (ligase route): step 1/1. Functionally, succinyl-CoA synthetase functions in the citric acid cycle (TCA), coupling the hydrolysis of succinyl-CoA to the synthesis of either ATP or GTP and thus represents the only step of substrate-level phosphorylation in the TCA. The beta subunit provides nucleotide specificity of the enzyme and binds the substrate succinate, while the binding sites for coenzyme A and phosphate are found in the alpha subunit. The polypeptide is Succinate--CoA ligase [ADP-forming] subunit beta (Brevibacillus brevis (strain 47 / JCM 6285 / NBRC 100599)).